A 205-amino-acid polypeptide reads, in one-letter code: Putative 3-methyladenine DNA glycosylase (205 aa).

The protein belongs to the DNA glycosylase MPG family.

The chain is Putative 3-methyladenine DNA glycosylase from Bacillus cereus (strain B4264).